The sequence spans 349 residues: Transcription repressor OFP5 (349 aa).

Disordered regions lie at residues 1–20 (MMRWGRKKPVSSSSSSGLSR), 29–94 (KLSG…KESN), and 143–183 (KQRC…GYSR). Positions 10–20 (VSSSSSSGLSR) are enriched in low complexity. The span at 37–48 (KPAKEKKQDEKA) shows a compositional bias: basic and acidic residues. Polar residues predominate over residues 49–62 (SQNISVKTSLSSTT). Composition is skewed to basic and acidic residues over residues 63–94 (RRSDIHENSKRFQRVSVEKENSATRSADKESN) and 143–167 (KQRCERRDQRLLEQKPKRSEQDAGV). Residues 286–345 (VVKCSSDPQKDFRDSMIEMIMENGINHPEELKELLVCYLRLNTDEYHDMIISVFQQVHND) enclose the OVATE domain.

In terms of assembly, interacts with BLH1, BLH2, BLH3, BLH4, BLH6 and BLH10. Expressed in roots, rosette and cauline leaves, and flower buds.

It localises to the nucleus. Transcriptional repressor that regulates multiple aspects of plant growth and development through the regulation of BEL1-LIKE (BLH) and KNOX TALE (KNAT) homeodomain transcription factors. Required for embryo development. This is Transcription repressor OFP5 (OFP5) from Arabidopsis thaliana (Mouse-ear cress).